Consider the following 186-residue polypeptide: Thiol:disulfide interchange protein CycY (186 aa).

The signal sequence occupies residues 1-20; sequence MGRYTLALLPLIVFGGIAHG. A Thioredoxin domain is found at 47 to 182; the sequence is DAEPAAARRA…LVPAMEKALG (136 aa). C80 and C83 are disulfide-bonded.

This sequence belongs to the thioredoxin family. DsbE subfamily.

It localises to the periplasm. In terms of biological role, required for disulfide bond formation in some periplasmic proteins. Also acts as a disulfide oxidoreductase in cytochromes c biogenesis. The cysteines of apocytochromes c must be in the reduced state for covalent linkage between the two moieties to occur. The protein is Thiol:disulfide interchange protein CycY (cycY) of Rhizobium leguminosarum bv. viciae.